A 678-amino-acid polypeptide reads, in one-letter code: MTPNEFFSIKYHILAKAELKAYIDKLADYLSQQSYLYHTLDKPIISDSDYDKLFRLLQDLVNDNPQFKPINSVLDRVGGEVLAGFETIKHKKKMTSLANVFSLEELRDFYDKIEYDIELECEPKMDGLAISIFYKNGKFDYAVTRGDGIQGEKVSENVKTIRNVPLKLNTSNPPEELEVRGEIILDKQSFLSLNEYMQTHENKTFANPRNAAAGSIRMLDSKVVAKRPLKLYSYGIGYFSKDFVYPETQFELMQLLQSFGFTISDNMFLAKNFSEVEEYHHKMSHQRADLAYDIDGLVFKVNNIKLQDTIGYTARGPKWAIAYKFPAEEVESEVLNVEFQVGRTGAITPVARLKPVAVGGVIVSNATLHNINEIKRKDIRVGDRVIVRRAGDVIPEVVKSLPQYRKSDAQMVEMPTNCPVCDSKIENVNDQAIYRCTGGWHCQAQTTERLKHFVSRKAMDIDKLGAKLIEQLVAANLIKYPADIYKLNFEQLTGLERMAAKSSQNVLDSITKSKEPSLARFIFAIGIKDIGEVSSDALANHFGSLESFRDAKFEELIEINDIGEIMANNIVSFWHDSLNIKIVEEFLAIGIKIQNPVKVEHAYNESFTGKTVVITGSFENYGRTELTQLLKSIGAKVTSSVSKKTDMVICGDNAGSKLTKAQELGVEVILEDNLKDLL.

Residues 47–51, 96–97, and E122 contribute to the NAD(+) site; these read DSDYD and SL. The N6-AMP-lysine intermediate role is filled by K124. Positions 145, 182, 300, and 324 each coordinate NAD(+). Residues C418, C421, C436, and C442 each contribute to the Zn(2+) site. Positions 602-678 constitute a BRCT domain; sequence AYNESFTGKT…ILEDNLKDLL (77 aa).

It belongs to the NAD-dependent DNA ligase family. LigA subfamily. Requires Mg(2+) as cofactor. It depends on Mn(2+) as a cofactor.

It catalyses the reaction NAD(+) + (deoxyribonucleotide)n-3'-hydroxyl + 5'-phospho-(deoxyribonucleotide)m = (deoxyribonucleotide)n+m + AMP + beta-nicotinamide D-nucleotide.. Its function is as follows. DNA ligase that catalyzes the formation of phosphodiester linkages between 5'-phosphoryl and 3'-hydroxyl groups in double-stranded DNA using NAD as a coenzyme and as the energy source for the reaction. It is essential for DNA replication and repair of damaged DNA. The chain is DNA ligase from Francisella tularensis subsp. tularensis (strain SCHU S4 / Schu 4).